The primary structure comprises 717 residues: Ferric reduction oxidase 3, mitochondrial (717 aa).

A mitochondrion-targeting transit peptide spans 1-23 (MAARGRLVVARGNRSFSSIIRKY). Transmembrane regions (helical) follow at residues 40–59 (LLTMVILMGTVVIWIMMPTS), 86–104 (LLVYMFPMILLASLGSIYL), 140–163 (LGIVTVTEVMFLMMFMALLLWSLA), 232–255 (YHIWLGNLVMTLFTSHGLCYCIYW), 306–330 (THYLYMVFMLFFVFHVGISYALISF), and 353–373 (LVSARVLPCETVELNFSKNPM). The Ferric oxidoreductase domain maps to 198–317 (GLTGNICLGF…YLYMVFMLFF (120 aa)). Heme-binding residues include histidine 233, histidine 247, histidine 307, and histidine 320. The FAD-binding FR-type domain occupies 346–451 (QSRNNVKLVS…EGPYGPASTD (106 aa)). 395-398 (HPFT) is a binding site for FAD. 443–446 (GPYG) contacts NAD(+). 2 helical membrane-spanning segments follow: residues 564–586 (WLWLATILSSSFMIFIIIIAIIS) and 606–627 (SLIYLLAISISVVATSTVAMLC).

It belongs to the ferric reductase (FRE) family. Requires FAD as cofactor. Expressed in root steele. Detected in shoots, leaves, stems, siliques, flowers and cotyledons.

The protein localises to the mitochondrion membrane. The catalysed reaction is 2 a Fe(II)-siderophore + NAD(+) + H(+) = 2 a Fe(III)-siderophore + NADH. Ferric chelate reductase involved in iron reduction in roots. May participate in the transport of electrons to a Fe(3+) ion via FAD and heme intermediates. This is Ferric reduction oxidase 3, mitochondrial (FRO3) from Arabidopsis thaliana (Mouse-ear cress).